The primary structure comprises 427 residues: Pectin acetylesterase 5 (427 aa).

The first 35 residues, 1–35 (MAIPRFSSLLRCRKWAKSDWLVASIGCVLIVFFLS), serve as a signal peptide directing secretion. Residue Asn-173 is glycosylated (N-linked (GlcNAc...) asparagine). Residues Ser-209, Asp-305, and His-372 each act as charge relay system in the active site. N-linked (GlcNAc...) asparagine glycosylation occurs at Asn-391.

This sequence belongs to the pectinacetylesterase family.

The protein resides in the secreted. It is found in the cell wall. Its function is as follows. Hydrolyzes acetyl esters in homogalacturonan regions of pectin. In type I primary cell wall, galacturonic acid residues of pectin can be acetylated at the O-2 and O-3 positions. Decreasing the degree of acetylation of pectin gels in vitro alters their physical properties. The sequence is that of Pectin acetylesterase 5 from Arabidopsis thaliana (Mouse-ear cress).